The chain runs to 355 residues: Methyltransferase FUS9 (355 aa).

S-adenosyl-L-homocysteine is bound by residues Tyr-18, Asn-63, Asp-86, Ser-123, and Phe-124. Mg(2+) is bound at residue Phe-231.

This sequence belongs to the methyltransferase superfamily. Type-7 methyltransferase family. Mg(2+) serves as cofactor.

It functions in the pathway mycotoxin biosynthesis. Functionally, methyltransferase; part of the gene cluster that mediates the biosynthesis of the mycotoxin fusarin C. Within the cluster, FUS1, FUS2, FUS8 and FUS9 are sufficient for fusarin production. The roles of the other FUS members are yet undetermined. The fusarin C synthetase FUS1 is responsible for the condensation of one acetyl-coenzyme A (CoA) unit with six malonyl-CoA units and the amide linkage of the arising heptaketide and homoserine, subsequently releasing the first intermediate, prefusarin, as an alcohol with an open ring structure. The cytochrome P450 monooxygenase FUS8 participates in multiple oxidation processes at carbon C-20 and is able to use the FUS1 product as substrate, resulting in formation of 20-hydroxy-prefusarin. This reaction seems to be essential before the 2-pyrrolidone ring closure can be catalyzed by FUS2, generating 20-hydroxy-fusarin. FUS8 is able to further oxidizes carbon C-20 after ring closure, resulting in the formation of carboxy-fusarin C. As the last step, FUS9 methylates the hydroxyl group at C-21 to generate fusarin C. Fusarin C can then rearrange to epi-fusarin C, the (z)-isomers, and fusarin A and fusarin D. The polypeptide is Methyltransferase FUS9 (Gibberella moniliformis (strain M3125 / FGSC 7600) (Maize ear and stalk rot fungus)).